The primary structure comprises 458 residues: Histone acetyltransferase Tip60 homolog (458 aa).

A disordered region spans residues 1–24 (MTEPKKEIIEDENHGISKKIPTDP). Residues 30–86 (VTEGCRLLVMMASQEEERWAEVISRCRAANGSIKFYVHYIDCNRRLDEWVQSDRLNL) enclose the Tudor-knot domain. Residues 94-123 (KGGKKGAHLREENRDSNENEGKKSGRKRKI) form a disordered region. A compositionally biased stretch (basic and acidic residues) spans 101-116 (HLREENRDSNENEGKK). Residues 168-446 (TRIRNVECIE…INPAALQWRP (279 aa)) enclose the MYST-type HAT domain. The C2HC MYST-type zinc finger occupies 201–226 (IYICEFCLKYLKSKTCLKRHMEKCAM). An N6-acetyllysine; by autocatalysis modification is found at Lys-268. Residues 311 to 313 (ILV) and 318 to 324 (QKKGYGS) contribute to the acetyl-CoA site. Glu-344 (proton donor/acceptor) is an active-site residue. Residues Ser-348 and Ser-357 each coordinate acetyl-CoA.

The protein belongs to the MYST (SAS/MOZ) family. In terms of assembly, interacts with transcription-associated protein trr-1. Probably a component of a complex with histone acetyltransferase (HAT) activity, at least composed of mys-1 and trr-1. In terms of processing, autoacetylation at Lys-268 is required for binding histones with high affinity and for proper function.

It localises to the nucleus. The catalysed reaction is L-lysyl-[protein] + acetyl-CoA = N(6)-acetyl-L-lysyl-[protein] + CoA + H(+). Its function is as follows. Probable catalytic subunit of the Tip60 chromatin-remodeling complex. Plays a role in acetylation of nucleosomal histone H4 and perhaps also H2A, probably acting as a component of the Tip60 histone acetyltransferase complex. Acts in the determination of vulval and distal tip cell (DTC) precursor cell fates. Involved in the positive regulation of transcription factor daf-16, probably acting by histone acetylation; thereby modulating stress resistance. The polypeptide is Histone acetyltransferase Tip60 homolog (Caenorhabditis elegans).